A 249-amino-acid chain; its full sequence is Structural protein VP10 (249 aa).

The protein localises to the virion. Its function is as follows. Forms the virion spike 'foot' and helps anchor the VP9 spike 'head' protein in the virion. The sequence is that of Structural protein VP10 (Segment-10) from Banna virus (BAV).